The chain runs to 573 residues: Arylsulfatase I (573 aa).

The signal sequence occupies residues 1–23; sequence MHALSGFSLVSLLSLGYLSWDWA. Ca(2+)-binding residues include Asp-55, Asp-56, and Cys-93. Cys-93 (nucleophile) is an active-site residue. A 3-oxoalanine (Cys) modification is found at Cys-93. Lys-147 serves as a coordination point for substrate. The active site involves His-149. Position 239 (His-239) interacts with substrate. Asn-276 and Asn-288 each carry an N-linked (GlcNAc...) asparagine glycan. Ca(2+) contacts are provided by Asp-297 and Asn-298. Lys-315 contributes to the substrate binding site. Residues Asn-466 and Asn-496 are each glycosylated (N-linked (GlcNAc...) asparagine). Positions 506 to 550 are disordered; the sequence is AANPRAHPDFNGGAWGPWASDEDEEEEDEEEEGRARSFPRGRRKK. The segment covering 525-537 has biased composition (acidic residues); the sequence is SDEDEEEEDEEEE.

The protein belongs to the sulfatase family. Requires Ca(2+) as cofactor. The oxidation of Cys-93 residue to 3-oxoalanine (also known as C(alpha)-formylglycine) by SUMF1/Sulfatase-modifying factor 1, seems critical for catalytic activity.

Its subcellular location is the secreted. The protein resides in the endoplasmic reticulum. Functionally, displays arylsulfatase activity at neutral pH, when co-expressed with SUMF1; arylsulfatase activity is measured in the secretion medium of retinal cell line, but no activity is recorded when measured in cell extracts. This chain is Arylsulfatase I (Arsi), found in Rattus norvegicus (Rat).